Here is a 78-residue protein sequence, read N- to C-terminus: MSRKCQITGKKANNAMAVSHSHRRTKKLQEVNLQWKRVWWPEGNRFVRLRLSTKAIKTLEKKGIDAMAREAGINLNKL.

Residues methionine 1–arginine 23 are disordered.

It belongs to the bacterial ribosomal protein bL28 family.

In Picosynechococcus sp. (strain ATCC 27264 / PCC 7002 / PR-6) (Agmenellum quadruplicatum), this protein is Large ribosomal subunit protein bL28.